Reading from the N-terminus, the 883-residue chain is Aldehyde-alcohol dehydrogenase (883 aa).

The aldehyde dehydrogenase stretch occupies residues 13–456; sequence KLVAEKHVDE…DNVSAINLLN (444 aa). Residues 121 to 126, Gly-206, and Gly-224 each bind NAD(+); that span reads ITPTTN. Cys-257 serves as the catalytic Nucleophile. NAD(+) contacts are provided by residues Glu-355, Leu-435, and 438-443; that span reads GSYGRN. A linker region spans residues 457–464; that stretch reads IKKVGRRR. NAD(+) is bound by residues Asp-500, Asp-534, 561–565, 612–613, Val-625, Lys-634, and Leu-653; these read GSPMD and TT. Residues Asp-668, His-672, His-736, and His-750 each contribute to the Fe cation site.

In the N-terminal section; belongs to the aldehyde dehydrogenase family. It in the C-terminal section; belongs to the iron-containing alcohol dehydrogenase family. The cofactor is Fe(2+).

It carries out the reaction ethanol + NAD(+) = acetaldehyde + NADH + H(+). The catalysed reaction is an aldehyde + NAD(+) + H2O = a carboxylate + NADH + 2 H(+). Functionally, has alcohol dehydrogenase activity. Has aldehyde dehydrogenase activity. May play a role in enhancing virulence in mice. May be considered a potential virulence factor. The sequence is that of Aldehyde-alcohol dehydrogenase from Streptococcus pneumoniae serotype 4 (strain ATCC BAA-334 / TIGR4).